The primary structure comprises 436 residues: GTPase Der (436 aa).

EngA-type G domains are found at residues 4 to 167 (PTVA…PTEV) and 175 to 351 (IRFS…ESQN). GTP-binding positions include 10-17 (GRPNVGKS), 57-61 (DTGGI), 119-122 (NKVD), 181-188 (GRPNVGKS), 229-233 (DTAGM), and 294-297 (NKWD). Positions 352-436 (RRISSAVLND…PIHLIARKRK (85 aa)) constitute a KH-like domain.

This sequence belongs to the TRAFAC class TrmE-Era-EngA-EngB-Septin-like GTPase superfamily. EngA (Der) GTPase family. Associates with the 50S ribosomal subunit.

Its function is as follows. GTPase that plays an essential role in the late steps of ribosome biogenesis. This is GTPase Der from Streptococcus thermophilus (strain CNRZ 1066).